A 35-amino-acid polypeptide reads, in one-letter code: Phospholipase A2 neuwieditoxin-1 (35 aa).

Positions 27, 29, and 31 each coordinate Ca(2+).

Belongs to the phospholipase A2 family. Group II subfamily. D49 sub-subfamily. Dimer. The cofactor is Ca(2+). Expressed by the venom gland.

The protein localises to the secreted. The catalysed reaction is a 1,2-diacyl-sn-glycero-3-phosphocholine + H2O = a 1-acyl-sn-glycero-3-phosphocholine + a fatty acid + H(+). Its function is as follows. Snake venom phospholipase A2 (PLA2) that shows presynaptic neurotoxicity. 10 ug/ml of this protein produce complete neuromuscular blockade up to 80 minutes, without inhibiting the responses to acetylcholine (ACh) and potassium chloride (KCl). In addition, it produces a calcium-dependent blockade of acetylcholine release and causes appearance of giant miniature end-plate potentials. PLA2 catalyzes the calcium-dependent hydrolysis of the 2-acyl groups in 3-sn-phosphoglycerides. The sequence is that of Phospholipase A2 neuwieditoxin-1 from Bothrops pauloensis (Neuwied's lancehead).